A 184-amino-acid polypeptide reads, in one-letter code: Ribosome-recycling factor (184 aa).

The protein belongs to the RRF family.

It localises to the cytoplasm. Responsible for the release of ribosomes from messenger RNA at the termination of protein biosynthesis. May increase the efficiency of translation by recycling ribosomes from one round of translation to another. The chain is Ribosome-recycling factor from Leptospira interrogans serogroup Icterohaemorrhagiae serovar copenhageni (strain Fiocruz L1-130).